Reading from the N-terminus, the 286-residue chain is Bifunctional protein FolD (286 aa).

Residues 165-167 (GRS) and serine 190 each bind NADP(+).

This sequence belongs to the tetrahydrofolate dehydrogenase/cyclohydrolase family. As to quaternary structure, homodimer.

The enzyme catalyses (6R)-5,10-methylene-5,6,7,8-tetrahydrofolate + NADP(+) = (6R)-5,10-methenyltetrahydrofolate + NADPH. The catalysed reaction is (6R)-5,10-methenyltetrahydrofolate + H2O = (6R)-10-formyltetrahydrofolate + H(+). The protein operates within one-carbon metabolism; tetrahydrofolate interconversion. In terms of biological role, catalyzes the oxidation of 5,10-methylenetetrahydrofolate to 5,10-methenyltetrahydrofolate and then the hydrolysis of 5,10-methenyltetrahydrofolate to 10-formyltetrahydrofolate. In Staphylococcus epidermidis (strain ATCC 12228 / FDA PCI 1200), this protein is Bifunctional protein FolD.